The sequence spans 125 residues: MITPTDKKSITDYGSPEQFLSQVNYLLGKQAYVGETASEGGFDANAVATANILETSTQEIGGKEYYYLSVLTRTADGDEGGKHQLITATVNGGKLYICKAQAGDKRWFKGARKFVENAATSFSVA.

At Ser15 the chain carries Phosphoserine.

This sequence belongs to the PsbP family.

The sequence is that of Putative oxygen-evolving enhancer protein 2-2 (PSBP2) from Arabidopsis thaliana (Mouse-ear cress).